The sequence spans 279 residues: Phenylalanine 3-hydroxylase (279 aa).

His140, His145, and Glu186 together coordinate Fe cation.

It belongs to the biopterin-dependent aromatic amino acid hydroxylase family. Fe(2+) serves as cofactor.

It carries out the reaction (6R)-L-erythro-5,6,7,8-tetrahydrobiopterin + L-phenylalanine + O2 = 3-hydroxy-L-phenylalanine + (4aS,6R)-4a-hydroxy-L-erythro-5,6,7,8-tetrahydrobiopterin. Functionally, in vitro, catalyzes the highly regiospecific C-3 hydroxylation of L-phenylalanine (L-Phe) to yield 3-hydroxy-L-phenylalanine (meta-Tyr), an amino acid found in bacterial secondary metabolites such as sanglifehrin A and some pacidamycins. Tetrahydrobiopterin (BH4) seems to be the physiological pterin, however the hydroxylase is also able to use 6-methyltetrahydropterin (6-MePH4). In Streptomyces coeruleorubidus, this protein is Phenylalanine 3-hydroxylase.